The primary structure comprises 250 residues: ATP synthase subunit a (250 aa).

6 helical membrane-spanning segments follow: residues 26 to 46, 84 to 104, 114 to 134, 143 to 163, 193 to 213, and 216 to 236; these read FTNA…FLYL, FFPM…LGMV, IIVT…YGFY, LFVP…IEII, FVAS…LPLI, and VALT…FAVL.

Belongs to the ATPase A chain family. As to quaternary structure, F-type ATPases have 2 components, CF(1) - the catalytic core - and CF(0) - the membrane proton channel. CF(1) has five subunits: alpha(3), beta(3), gamma(1), delta(1), epsilon(1). CF(0) has three main subunits: a(1), b(2) and c(9-12). The alpha and beta chains form an alternating ring which encloses part of the gamma chain. CF(1) is attached to CF(0) by a central stalk formed by the gamma and epsilon chains, while a peripheral stalk is formed by the delta and b chains.

It is found in the cell inner membrane. Key component of the proton channel; it plays a direct role in the translocation of protons across the membrane. This chain is ATP synthase subunit a, found in Rhizobium meliloti (strain 1021) (Ensifer meliloti).